The chain runs to 572 residues: Mitochondrial distribution and morphology protein 34 (572 aa).

In terms of domain architecture, SMP-LTD spans 1–195 (MAFNFNWSPL…LPAIIHRLSL (195 aa)). Disordered stretches follow at residues 210 to 239 (TQAE…VDAL), 330 to 423 (SASI…PLSP), and 455 to 482 (RDMG…TPRA). A compositionally biased stretch (polar residues) spans 330-347 (SASIASMQTRSSTPSHTF). Residues 358 to 370 (RHSKAHSRKRKKR) show a composition bias toward basic residues. The span at 371 to 381 (VVDLRRPKTTD) shows a compositional bias: basic and acidic residues. 2 stretches are compositionally biased toward polar residues: residues 387–400 (SDES…SAPS) and 460–480 (PSST…SATP).

It belongs to the MDM34 family. Component of the ER-mitochondria encounter structure (ERMES) or MDM complex, composed of mmm1, mdm10, mdm12 and mdm34.

It is found in the mitochondrion outer membrane. Component of the ERMES/MDM complex, which serves as a molecular tether to connect the endoplasmic reticulum (ER) and mitochondria. Components of this complex are involved in the control of mitochondrial shape and protein biogenesis, and function in nonvesicular lipid trafficking between the ER and mitochondria. Mdm34 is required for the interaction of the ER-resident membrane protein mmm1 and the outer mitochondrial membrane-resident beta-barrel protein mdm10. This chain is Mitochondrial distribution and morphology protein 34, found in Aspergillus clavatus (strain ATCC 1007 / CBS 513.65 / DSM 816 / NCTC 3887 / NRRL 1 / QM 1276 / 107).